The sequence spans 427 residues: Hydroxylamine reductase (427 aa).

[4Fe-4S] cluster contacts are provided by C3, C6, C15, and C21. Residues H129, E153, C197, C283, C311, C336, E370, and K372 each contribute to the hybrid [4Fe-2O-2S] cluster site. Cysteine persulfide is present on C283.

This sequence belongs to the HCP family. It depends on [4Fe-4S] cluster as a cofactor. Hybrid [4Fe-2O-2S] cluster serves as cofactor.

The protein localises to the cytoplasm. It carries out the reaction A + NH4(+) + H2O = hydroxylamine + AH2 + H(+). Its function is as follows. Catalyzes the reduction of hydroxylamine to form NH(3) and H(2)O. This is Hydroxylamine reductase from Moorella thermoacetica (strain ATCC 39073 / JCM 9320).